Reading from the N-terminus, the 334-residue chain is Malate dehydrogenase 2 (334 aa).

12–18 (GAAGRVA) lines the NAD(+) pocket. Substrate contacts are provided by Arg93 and Arg99. NAD(+)-binding positions include Asn106, Gln113, and 130–132 (VGN). Substrate-binding residues include Asn132 and Arg166. The Proton acceptor role is filled by His191.

Belongs to the LDH/MDH superfamily. MDH type 2 family.

The catalysed reaction is (S)-malate + NAD(+) = oxaloacetate + NADH + H(+). Its function is as follows. Catalyzes the reversible oxidation of malate to oxaloacetate. In Albidiferax ferrireducens (strain ATCC BAA-621 / DSM 15236 / T118) (Rhodoferax ferrireducens), this protein is Malate dehydrogenase 2.